Reading from the N-terminus, the 337-residue chain is Ferredoxin--NADP reductase (337 aa).

7 residues coordinate FAD: D35, Q43, Y48, A88, F122, D289, and T330.

This sequence belongs to the ferredoxin--NADP reductase type 2 family. Homodimer. FAD is required as a cofactor.

It catalyses the reaction 2 reduced [2Fe-2S]-[ferredoxin] + NADP(+) + H(+) = 2 oxidized [2Fe-2S]-[ferredoxin] + NADPH. This is Ferredoxin--NADP reductase from Ehrlichia ruminantium (strain Welgevonden).